The primary structure comprises 396 residues: Calcium-binding and spermatid-specific protein 1 (396 aa).

Positions 1-21 (MAEDGLPKIYSHPPTESSKTP) are disordered. Position 274 is a phosphoserine (S274). The disordered stretch occupies residues 276–296 (EKDKDNQEDTLLTDEESPEGA). A compositionally biased stretch (acidic residues) spans 283 to 293 (EDTLLTDEESP). T288 is subject to Phosphothreonine; by CK2. S320 and S377 each carry phosphoserine. Positions 336 to 396 (EDSSTEEELS…LKEEPDEFMI (61 aa)) are disordered.

It is found in the cytoplasm. It localises to the mitochondrion inner membrane. The protein localises to the cell projection. Its subcellular location is the cilium. The protein resides in the flagellum. It is found in the cytoplasmic vesicle. It localises to the secretory vesicle. The protein localises to the acrosome. Its function is as follows. Calcium-binding protein. Essential for maintaining the structural integrity of the sperm flagella. This is Calcium-binding and spermatid-specific protein 1 (CABS1) from Macaca fascicularis (Crab-eating macaque).